The following is a 188-amino-acid chain: Archaetidylinositol phosphate synthase (188 aa).

Helical transmembrane passes span 20–40 (LASL…ITLL) and 51–71 (ILAG…GALA). 4 residues coordinate Mg(2+): Asp64, Asp67, Asp85, and Asp89. Catalysis depends on Asp89, which acts as the Proton acceptor. 2 helical membrane-spanning segments follow: residues 96–116 (ILFG…LTLI) and 147–167 (IIII…YLVA).

Belongs to the CDP-alcohol phosphatidyltransferase class-I family. Requires Mn(2+) as cofactor. Mg(2+) is required as a cofactor.

The protein localises to the cell membrane. The enzyme catalyses CDP-2,3-bis-O-(phytanyl)-sn-glycerol + 1D-myo-inositol 3-phosphate = saturated 1-archaetidyl-1D-myo-inositol 3-phosphate + CMP + H(+). Its pathway is lipid metabolism; phospholipid metabolism. Its function is as follows. Catalyzes the formation of archaetidylinositol phosphate (AIP) from CDP-archaeol (CDP-ArOH or CDP-2,3-bis-(O-phytanyl)-sn-glycerol) and 1L-myo-inositol 1-phosphate (IP or 1D-myo-inositol 3-phosphate). AIP is a precursor of archaetidyl-myo-inositol (AI), an ether-type inositol phospholipid ubiquitously distributed in archaea membranes and essential for glycolipid biosynthesis in archaea. The protein is Archaetidylinositol phosphate synthase of Pyrococcus horikoshii (strain ATCC 700860 / DSM 12428 / JCM 9974 / NBRC 100139 / OT-3).